The sequence spans 767 residues: DNA topoisomerase 1 (767 aa).

Over residues 1–23 (MSGDHLHNDSQIEADFRLNDSHK) the composition is skewed to basic and acidic residues. Positions 1–201 (MSGDHLHNDS…NKKKKPKKEE (201 aa)) are disordered. S2 bears the N-acetylserine mark. A phosphoserine mark is found at S2 and S10. A compositionally biased stretch (basic residues) spans 24–39 (HKDKHKDREHRHKEHK). Residues 40–110 (KDKEKDREKS…DAKIKKEKEN (71 aa)) are compositionally biased toward basic and acidic residues. Position 59 is a phosphoserine (S59). K103 participates in a covalent cross-link: Glycyl lysine isopeptide (Lys-Gly) (interchain with G-Cter in SUMO2). Residue K105 forms a Glycyl lysine isopeptide (Lys-Gly) (interchain with G-Cter in SUMO); alternate linkage. A Glycyl lysine isopeptide (Lys-Gly) (interchain with G-Cter in SUMO2); alternate cross-link involves residue K105. Phosphoserine is present on S114. K119 is covalently cross-linked (Glycyl lysine isopeptide (Lys-Gly) (interchain with G-Cter in SUMO); alternate). K119 is covalently cross-linked (Glycyl lysine isopeptide (Lys-Gly) (interchain with G-Cter in SUMO2); alternate). K119 is covalently cross-linked (Glycyl lysine isopeptide (Lys-Gly) (interchain with G-Cter in SUMO1); alternate). Positions 131 to 168 (PKEDIKPLKRPRDEDDADYKPKKIKTEDIKKEKKRKLE) are enriched in basic and acidic residues. Residues K136 and K150 each participate in a glycyl lysine isopeptide (Lys-Gly) (interchain with G-Cter in SUMO2) cross-link. Residue K155 forms a Glycyl lysine isopeptide (Lys-Gly) (interchain with G-Cter in SUMO); alternate linkage. K155 is covalently cross-linked (Glycyl lysine isopeptide (Lys-Gly) (interchain with G-Cter in SUMO2); alternate). Residues K160 and K166 each participate in a glycyl lysine isopeptide (Lys-Gly) (interchain with G-Cter in SUMO2) cross-link. Residue K174 forms a Glycyl lysine isopeptide (Lys-Gly) (interchain with G-Cter in SUMO2); alternate linkage. K174 is subject to N6-acetyllysine; alternate. A compositionally biased stretch (basic and acidic residues) spans 181–201 (KDKDKKGAESDNKKKKPKKEE). K206 participates in a covalent cross-link: Glycyl lysine isopeptide (Lys-Gly) (interchain with G-Cter in SUMO2). Residue K282 is modified to N6-acetyllysine. A Glycyl lysine isopeptide (Lys-Gly) (interchain with G-Cter in SUMO2) cross-link involves residue K338. Interaction with DNA stretches follow at residues 427-428 (KY) and 490-495 (RAGNEK). The 334-residue stretch at 434–767 (SSRIKGEKDW…IDMTDEDYEF (334 aa)) folds into the Topo IB-type catalytic domain. S508 is modified (phosphoserine; by CK2). K551 is covalently cross-linked (Glycyl lysine isopeptide (Lys-Gly) (interchain with G-Cter in SUMO2)). An interaction with DNA region spans residues 587-589 (TAK). Glycyl lysine isopeptide (Lys-Gly) (interchain with G-Cter in SUMO2) cross-links involve residues K644, K702, and K714. Catalysis depends on Y725, which acts as the O-(3'-phospho-DNA)-tyrosine intermediate.

Belongs to the type IB topoisomerase family. In terms of assembly, monomer. Interacts with ERCC6. Interacts with TPRN; TPRN interacts with a number of DNA damage response proteins, is recruited to sites of DNA damage and may play a role in DNA damage repair. In terms of processing, sumoylated. Lys-119 is the main site of sumoylation. Sumoylation plays a role in partitioning TOP1 between nucleoli and nucleoplasm. Levels are dramatically increased on camptothecin (CPT) treatment. Post-translationally, phosphorylation at Ser-508 by CK2 increases binding to supercoiled DNA and sensitivity to camptothecin.

The protein localises to the nucleus. Its subcellular location is the nucleolus. It localises to the nucleoplasm. It catalyses the reaction ATP-independent breakage of single-stranded DNA, followed by passage and rejoining.. Its activity is regulated as follows. Specifically inhibited by camptothecin (CPT), a plant alkaloid with antitumor activity. In terms of biological role, releases the supercoiling and torsional tension of DNA introduced during the DNA replication and transcription by transiently cleaving and rejoining one strand of the DNA duplex. Introduces a single-strand break via transesterification at a target site in duplex DNA. The scissile phosphodiester is attacked by the catalytic tyrosine of the enzyme, resulting in the formation of a DNA-(3'-phosphotyrosyl)-enzyme intermediate and the expulsion of a 5'-OH DNA strand. The free DNA strand then rotates around the intact phosphodiester bond on the opposing strand, thus removing DNA supercoils. Finally, in the religation step, the DNA 5'-OH attacks the covalent intermediate to expel the active-site tyrosine and restore the DNA phosphodiester backbone. Regulates the alternative splicing of tissue factor (F3) pre-mRNA in endothelial cells. Involved in the circadian transcription of the core circadian clock component BMAL1 by altering the chromatin structure around the ROR response elements (ROREs) on the BMAL1 promoter. The chain is DNA topoisomerase 1 (TOP1) from Cricetulus griseus (Chinese hamster).